The following is a 271-amino-acid chain: Mannosyl-3-phosphoglycerate phosphatase (271 aa).

Aspartate 13 serves as the catalytic Nucleophile. Positions 13, 15, and 214 each coordinate Mg(2+).

The protein belongs to the HAD-like hydrolase superfamily. MPGP family. Mg(2+) is required as a cofactor.

The protein resides in the cytoplasm. It carries out the reaction 2-O-(alpha-D-mannosyl)-3-phosphoglycerate + H2O = (2R)-2-O-(alpha-D-mannosyl)-glycerate + phosphate. This chain is Mannosyl-3-phosphoglycerate phosphatase, found in Escherichia coli O45:K1 (strain S88 / ExPEC).